Here is an 82-residue protein sequence, read N- to C-terminus: MAAGSTGERPFFEIITSIRYWVIHAITLPSIFLAGFLFVSTGLAYDAFGTPRPDAYFQATESKAPVVSQRYEGKSQLDDRLQ.

The helical transmembrane segment at 22–36 (VIHAITLPSIFLAGF) threads the bilayer. Residue His-24 participates in heme binding.

It belongs to the PsbE/PsbF family. Heterodimer of an alpha subunit and a beta subunit. PSII is composed of 1 copy each of membrane proteins PsbA, PsbB, PsbC, PsbD, PsbE, PsbF, PsbH, PsbI, PsbJ, PsbK, PsbL, PsbM, PsbT, PsbX, PsbY, PsbZ, Psb30/Ycf12, peripheral proteins PsbO, CyanoQ (PsbQ), PsbU, PsbV and a large number of cofactors. It forms dimeric complexes. The cofactor is heme b.

The protein resides in the cellular thylakoid membrane. Its function is as follows. This b-type cytochrome is tightly associated with the reaction center of photosystem II (PSII). PSII is a light-driven water:plastoquinone oxidoreductase that uses light energy to abstract electrons from H(2)O, generating O(2) and a proton gradient subsequently used for ATP formation. It consists of a core antenna complex that captures photons, and an electron transfer chain that converts photonic excitation into a charge separation. In Synechococcus sp. (strain WH7803), this protein is Cytochrome b559 subunit alpha.